The sequence spans 182 residues: Helofensin-3 (182 aa).

The signal sequence occupies residues 1–26; the sequence is MQMDWLFIAVISGIGLLSSGVPGTQG. A C(6)C(4)C(9)C(6)CC 1; approximate repeat occupies 27-64; that stretch reads AYTTEQCRALNGSCNFYACFPKNVIIGKCDWWGWSCCA. One copy of the C(6)C(4)C(9)C(6)CC 2; approximate repeat lies at 65–101; the sequence is RTPLERCTAKKGTCTKTGCTKTDTDHGPCDGGAQCCQ. A C(6)C(4)C(9)C(6)CC 3; approximate repeat occupies 102 to 138; that stretch reads RDPVKYCKFHGNVCGRGKCPMDHIPIGECTPGYPCCK. A C(6)C(4)C(9)C(6)CC 4; approximate repeat occupies 139–176; that stretch reads RDGPAYCKSKGGKCLNRCPQIVPTNVIGVCATGVPCCK.

The protein belongs to the beta-defensin family. Helofensin subfamily. In terms of tissue distribution, expressed by the mandibular venom gland.

It localises to the secreted. In terms of biological role, lethal toxin which possesses an inhibitory effect on direct electrical stimulation of the isolated hemi-diaphragm of mice. Neither hemorrhagic nor hemolytic activities are detected. Phospholipase A2 activity, proteolytic activity and arginine esterolytic activity are absent. The polypeptide is Helofensin-3 (Heloderma suspectum cinctum (Banded Gila monster)).